The chain runs to 401 residues: Haptoglobin (401 aa).

A signal peptide spans 1 to 18 (MSALQAVVTLLLCGQLLA). Sushi domains follow at residues 28 to 83 (DSCP…ECEE) and 85 to 142 (DSCP…ECEA). Cystine bridges form between Cys49–Cys81, Cys106–Cys140, and Cys144–Cys261. The Peptidase S1 domain occupies 157-399 (IIGGSLDAKG…ILDWVRKTIA (243 aa)). Residues Asn286 and Asn316 are each glycosylated (N-linked (GlcNAc...) asparagine). Intrachain disulfides connect Cys304-Cys335 and Cys346-Cys376. The tract at residues 313 to 318 (APKNKT) is interaction with CD163.

The protein belongs to the peptidase S1 family. In terms of assembly, tetramer of two alpha and two beta chains; disulfide-linked. The hemoglobin/haptoglobin complex is composed of a haptoglobin dimer bound to two hemoglobin alpha-beta dimers. Interacts with CD163. Interacts with ERGIC3. In terms of tissue distribution, expressed by the liver and secreted in plasma.

Its subcellular location is the secreted. The protein localises to the extracellular space. Its function is as follows. As a result of hemolysis, hemoglobin is found to accumulate in the kidney and is secreted in the urine. Haptoglobin captures, and combines with free plasma hemoglobin to allow hepatic recycling of heme iron and to prevent kidney damage. Haptoglobin also acts as an antioxidant, has antibacterial activity and plays a role in modulating many aspects of the acute phase response. Hemoglobin/haptoglobin complexes are rapidly cleared by the macrophage CD163 scavenger receptor expressed on the surface of liver Kupfer cells through an endocytic lysosomal degradation pathway. The protein is Haptoglobin (HP) of Bos taurus (Bovine).